The chain runs to 363 residues: tRNA(Met) cytidine acetate ligase (363 aa).

ATP is bound by residues 7 to 20, G96, N152, and R175; that span reads IAEF…HKYL.

This sequence belongs to the TmcAL family.

The protein localises to the cytoplasm. The enzyme catalyses cytidine(34) in elongator tRNA(Met) + acetate + ATP = N(4)-acetylcytidine(34) in elongator tRNA(Met) + AMP + diphosphate. Its function is as follows. Catalyzes the formation of N(4)-acetylcytidine (ac(4)C) at the wobble position of elongator tRNA(Met), using acetate and ATP as substrates. First activates an acetate ion to form acetyladenylate (Ac-AMP) and then transfers the acetyl group to tRNA to form ac(4)C34. This is tRNA(Met) cytidine acetate ligase from Streptococcus gordonii (strain Challis / ATCC 35105 / BCRC 15272 / CH1 / DL1 / V288).